The sequence spans 486 residues: Betaine aldehyde dehydrogenase (486 aa).

Residues T23 and D90 each coordinate K(+). 147–149 provides a ligand contact to NAD(+); sequence GAW. K159 (charge relay system) is an active-site residue. Residues 173–176 and 226–229 contribute to the NAD(+) site; these read KPSE and ESGT. Residue L241 coordinates K(+). The Proton acceptor role is filled by E247. G249, C281, and E382 together coordinate NAD(+). The active-site Nucleophile is the C281. Position 281 is a cysteine sulfenic acid (-SOH) (C281). The K(+) site is built by K452 and G455. The active-site Charge relay system is the E459.

It belongs to the aldehyde dehydrogenase family. In terms of assembly, dimer of dimers. K(+) serves as cofactor.

The enzyme catalyses betaine aldehyde + NAD(+) + H2O = glycine betaine + NADH + 2 H(+). Its pathway is amine and polyamine biosynthesis; betaine biosynthesis via choline pathway; betaine from betaine aldehyde: step 1/1. Involved in the biosynthesis of the osmoprotectant glycine betaine. Catalyzes the irreversible oxidation of betaine aldehyde to the corresponding acid. In Vibrio vulnificus (strain YJ016), this protein is Betaine aldehyde dehydrogenase.